Consider the following 65-residue polypeptide: Large ribosomal subunit protein bL33c (65 aa).

Belongs to the bacterial ribosomal protein bL33 family.

The protein localises to the plastid. The protein resides in the chloroplast. In Chaetosphaeridium globosum (Charophycean green alga), this protein is Large ribosomal subunit protein bL33c.